The chain runs to 365 residues: Flagellin 1 (365 aa).

This sequence belongs to the bacterial flagellin family.

It localises to the secreted. Its subcellular location is the bacterial flagellum. Its function is as follows. Flagellin is the subunit protein which polymerizes to form the filaments of bacterial flagella. In Proteus mirabilis, this protein is Flagellin 1 (fliC1).